Consider the following 275-residue polypeptide: Large ribosomal subunit protein uL2 (275 aa).

The tract at residues 223-275 (VVMNPVDHPHGGGEGKSSGGRHPVSPWGMPTKGYKTRKNKGTDQYIVRRRNKK) is disordered.

This sequence belongs to the universal ribosomal protein uL2 family. Part of the 50S ribosomal subunit. Forms a bridge to the 30S subunit in the 70S ribosome.

In terms of biological role, one of the primary rRNA binding proteins. Required for association of the 30S and 50S subunits to form the 70S ribosome, for tRNA binding and peptide bond formation. It has been suggested to have peptidyltransferase activity; this is somewhat controversial. Makes several contacts with the 16S rRNA in the 70S ribosome. The chain is Large ribosomal subunit protein uL2 from Psychromonas ingrahamii (strain DSM 17664 / CCUG 51855 / 37).